We begin with the raw amino-acid sequence, 447 residues long: MITIKKGLDLPIAGKPAQVIHSGNAVNQVAILGEEYVGMRPSMKVREGDVVKKGQVLFEDKKNPGVIFTAPASGTITAINRGEKRVLQSVVINVEGDEKITFAKYSTEQLNTLSSEQVKQNLIESGLWTALRTRPFSKVPSIESEASSIFVNAMDTNPLAADPSVVLKEYSQDFTNGLTVLSRLFPSKPLHLCKAGDSNIPTADLENLQIHDFTGVHPAGLVGTHIHFIDPVGIQKTVWHINYQDVIAVGKLFTTGELYSERVISLAGPQVKEPRLVRTTIGANLSQLTQNELSAGKNRVISGSVLCGQIAKDSHDYLGRYALQVSVIAEGNEKEFFGWIMPQANKYSVTRTVLGHFSKKLFNFTTSENGGERAMVPIGSYERVMPLDILPTLLLRDLIVGDTDGAQELGCLELDEEDLALCSFVCPGKYEYGSILRQVLDKIEKEG.

The protein belongs to the NqrA family. In terms of assembly, composed of six subunits; NqrA, NqrB, NqrC, NqrD, NqrE and NqrF.

It catalyses the reaction a ubiquinone + n Na(+)(in) + NADH + H(+) = a ubiquinol + n Na(+)(out) + NAD(+). In terms of biological role, NQR complex catalyzes the reduction of ubiquinone-1 to ubiquinol by two successive reactions, coupled with the transport of Na(+) ions from the cytoplasm to the periplasm. NqrA to NqrE are probably involved in the second step, the conversion of ubisemiquinone to ubiquinol. The polypeptide is Na(+)-translocating NADH-quinone reductase subunit A (Haemophilus influenzae (strain ATCC 51907 / DSM 11121 / KW20 / Rd)).